The chain runs to 368 residues: Quinolinate synthase (368 aa).

Iminosuccinate contacts are provided by His-46 and Ser-63. Residue Cys-110 coordinates [4Fe-4S] cluster. Iminosuccinate contacts are provided by residues 141 to 143 (YVN) and Ser-162. Position 230 (Cys-230) interacts with [4Fe-4S] cluster. Iminosuccinate is bound by residues 256-258 (HPE) and Thr-273. Residue Cys-320 coordinates [4Fe-4S] cluster.

It belongs to the quinolinate synthase family. Type 3 subfamily. [4Fe-4S] cluster is required as a cofactor.

It localises to the cytoplasm. It carries out the reaction iminosuccinate + dihydroxyacetone phosphate = quinolinate + phosphate + 2 H2O + H(+). Its pathway is cofactor biosynthesis; NAD(+) biosynthesis; quinolinate from iminoaspartate: step 1/1. Functionally, catalyzes the condensation of iminoaspartate with dihydroxyacetone phosphate to form quinolinate. The sequence is that of Quinolinate synthase from Bacillus cereus (strain ATCC 10987 / NRS 248).